Consider the following 566-residue polypeptide: MARKQNRNSKELGLAPLADDTSHAGPPGPGRALLECDHLRSGLPDGRRRKDWSCSLLVASLAGAFGSSFLYGYNLSVVNAPTPYIKAFYNESWERRHGRPIDPDTLTLLWSVTVSIFAIGGLVGTLMVKMIGKVLGRKHTLLANNGFAISAALLMACSLQAGAFEMLIVGRFIMGIDGGIALSVLPMYLSEISPKEIRGSLGQVTAIFICIGVFTGQLLGLPELLGKESTWPYLFGVIVVPAVVQLLSLPFLPDSPRYLLLEKRNEARAVKAFQTFLGKADVSREVEEVAESRVQRSIRLVSVLELLRAPYVRWQVVTVIVTMACYQLCGLNAIWFYTNSIFGKAGIPPAKIPYVTLSTGGIETLAAIFSGLVIEHLGRRPLLIGGFGLMALFFGTLTVTLTLQDRAPWVPYLSIVGILAIIASFCSGPGGIPFILTGEFFQQSQRPAAFIIAGTVNWLSNFAVGLLFPFIQKSLDTYCFLVFATICMTGAIYLYFVLPETKNRTYAEISQAFSKRNKAYPPEEKIDSAVTDGKTKGRPEQVSSSTLDNYVKNRIVYMDDLTFQET.

Residues M1–R31 are disordered. At M1 to D51 the chain is on the cytoplasmic side. S9 carries the phosphoserine modification. A helical transmembrane segment spans residues W52–G72. Over Y73 to T107 the chain is Extracellular. N-linked (GlcNAc...) asparagine glycosylation is found at N74 and N90. The helical transmembrane segment at L108 to V128 threads the bilayer. Residues K129 to T140 lie on the Cytoplasmic side of the membrane. The helical transmembrane segment at L141–A161 threads the bilayer. The Extracellular segment spans residues G162 to R171. A helical transmembrane segment spans residues F172–I192. The Cytoplasmic segment spans residues S193 to S200. Residues L201 to L221 form a helical membrane-spanning segment. Residues P222–W231 are Extracellular-facing. Residues P232 to L252 form a helical membrane-spanning segment. At P253–V316 the chain is on the cytoplasmic side. Residues V317–Y337 traverse the membrane as a helical segment. Over T338–Y354 the chain is Extracellular. Residues V355–E375 traverse the membrane as a helical segment. Residues H376 to P381 lie on the Cytoplasmic side of the membrane. A helical transmembrane segment spans residues L382 to T402. Topologically, residues L403 to I415 are extracellular. A helical transmembrane segment spans residues V416–L436. Residues T437 to I451 lie on the Cytoplasmic side of the membrane. Residues I452–Q472 form a helical membrane-spanning segment. At K473–Y478 the chain is on the extracellular side. Residues C479–P499 form a helical membrane-spanning segment. Residues E500–T566 lie on the Cytoplasmic side of the membrane. S514 is modified (phosphoserine). Residues E524–P539 show a composition bias toward basic and acidic residues. A disordered region spans residues E524–S543.

The protein belongs to the major facilitator superfamily. Sugar transporter (TC 2.A.1.1) family.

It localises to the basolateral cell membrane. The protein localises to the apical cell membrane. The catalysed reaction is urate(out) = urate(in). Its function is as follows. High-capacity urate transporter, which may play a role in the urate reabsorption by proximal tubules. May have a residual high-affinity, low-capacity glucose and fructose transporter activity. Transports urate at rates 45- to 60-fold faster than glucose. Does not transport galactose. May mediate small uptake of adenine but not of other nucleobases. The chain is Solute carrier family 2, facilitated glucose transporter member 9 from Pongo abelii (Sumatran orangutan).